Reading from the N-terminus, the 66-residue chain is UPF0337 protein SAG0606 (66 aa).

Over residues 1 to 10 the composition is skewed to basic and acidic residues; the sequence is MSQEKLKSKV. The disordered stretch occupies residues 1-23; it reads MSQEKLKSKVEQASGSLKEGAGK.

The protein belongs to the UPF0337 (CsbD) family.

The protein is UPF0337 protein SAG0606 of Streptococcus agalactiae serotype V (strain ATCC BAA-611 / 2603 V/R).